Here is a 370-residue protein sequence, read N- to C-terminus: Uroporphyrinogen decarboxylase (370 aa).

Substrate-binding positions include R29–R33, D79, Y155, S210, and H342.

This sequence belongs to the uroporphyrinogen decarboxylase family. Homodimer.

The protein resides in the cytoplasm. It carries out the reaction uroporphyrinogen III + 4 H(+) = coproporphyrinogen III + 4 CO2. Its pathway is porphyrin-containing compound metabolism; protoporphyrin-IX biosynthesis; coproporphyrinogen-III from 5-aminolevulinate: step 4/4. In terms of biological role, catalyzes the decarboxylation of four acetate groups of uroporphyrinogen-III to yield coproporphyrinogen-III. The polypeptide is Uroporphyrinogen decarboxylase (Delftia acidovorans (strain DSM 14801 / SPH-1)).